Reading from the N-terminus, the 192-residue chain is MITISDAAQAHFVTLLADQPEGTHIRVFVISPGTATAECGVSYCPPDAVEADDMEFEFNGFNAMVDEKSAPFLEEASIDFVTDQLGSQLTLKAPNAKMRKVASDAPLSERIDYVIQSEINPQLASHGGNIMLVEVTEEGTAILQFGGGCNGCSMVDVTLKDGIETQLLEKFPGELTGVKDVTEHQHGDHSYQ.

Residues cysteine 149 and cysteine 152 each coordinate [4Fe-4S] cluster.

This sequence belongs to the NfuA family. As to quaternary structure, homodimer. The cofactor is [4Fe-4S] cluster.

In terms of biological role, involved in iron-sulfur cluster biogenesis. Binds a 4Fe-4S cluster, can transfer this cluster to apoproteins, and thereby intervenes in the maturation of Fe/S proteins. Could also act as a scaffold/chaperone for damaged Fe/S proteins. This Shewanella sediminis (strain HAW-EB3) protein is Fe/S biogenesis protein NfuA.